The following is a 470-amino-acid chain: MRAARCSIIRGAAGLRMASSVMSEMKEQMLKRSKVEKQTISELRKKHGDVKLSDASIDAAYCGMRGITGLVYEPSLLDPVEGIRFRNRTIPECQEVLPKAPNGCETLPEAMFWLLMTGEVPTAEQARALNAELHRRADPVAIAAAQKAIAALPASTHPMTAFSVGVLALQTYSKFAAAYATGKSNKTTYWEYALEDSLDMLARTPAVAAMIYNRVTKGRAEVAASSNSELDWAANFSNMLGFKDNEFWECMRLYLSIHVDHEGGNVSAHTTTLVASALSDPYLAFSAGLNGLAGPLHGLANQEVLKYLLSMQDRVKADGVNVCDEAALEVALTKYTWELLNSGQVVPGYGHAVLRKVDPRYTCLRNFCLRHHFEDDLFKLINIIYKIMPGILTEHGKTKNPYPNVDAHSGVLLQHYGLTEQDYYTVLFGLSRQMGVMAGVVWDRLQGRPLERPKSITTEMLAKKYLCTPR.

Active-site residues include H297, H351, and D406.

Belongs to the citrate synthase family. In terms of assembly, homodimer.

The protein resides in the mitochondrion matrix. The catalysed reaction is oxaloacetate + acetyl-CoA + H2O = citrate + CoA + H(+). It functions in the pathway carbohydrate metabolism; tricarboxylic acid cycle; isocitrate from oxaloacetate: step 1/2. This is Probable citrate synthase, mitochondrial from Leishmania braziliensis.